Here is a 758-residue protein sequence, read N- to C-terminus: 5-methyltetrahydropteroyltriglutamate--homocysteine methyltransferase (758 aa).

5-methyltetrahydropteroyltri-L-glutamate is bound by residues 17-20 (RELK) and Lys-117. L-homocysteine contacts are provided by residues 434 to 436 (IGS) and Glu-487. Residues 434–436 (IGS) and Glu-487 each bind L-methionine. 5-methyltetrahydropteroyltri-L-glutamate-binding positions include 518 to 519 (RC) and Trp-564. Asp-602 lines the L-homocysteine pocket. L-methionine is bound at residue Asp-602. Residue Glu-608 coordinates 5-methyltetrahydropteroyltri-L-glutamate. Residues His-644, Cys-646, and Glu-668 each contribute to the Zn(2+) site. The active-site Proton donor is the His-697. Cys-729 contributes to the Zn(2+) binding site.

Belongs to the vitamin-B12 independent methionine synthase family. Zn(2+) is required as a cofactor.

The enzyme catalyses 5-methyltetrahydropteroyltri-L-glutamate + L-homocysteine = tetrahydropteroyltri-L-glutamate + L-methionine. Its pathway is amino-acid biosynthesis; L-methionine biosynthesis via de novo pathway; L-methionine from L-homocysteine (MetE route): step 1/1. Functionally, catalyzes the transfer of a methyl group from 5-methyltetrahydrofolate to homocysteine resulting in methionine formation. This Serratia proteamaculans (strain 568) protein is 5-methyltetrahydropteroyltriglutamate--homocysteine methyltransferase.